We begin with the raw amino-acid sequence, 198 residues long: Recombination protein RecR (198 aa).

The segment at 57–72 (CAQCRTLTEHSLCEYC) adopts a C4-type zinc-finger fold. A Toprim domain is found at 80–175 (SLLCIVESPA…RTTRIAHGIP (96 aa)).

The protein belongs to the RecR family.

May play a role in DNA repair. It seems to be involved in an RecBC-independent recombinational process of DNA repair. It may act with RecF and RecO. In Methylococcus capsulatus (strain ATCC 33009 / NCIMB 11132 / Bath), this protein is Recombination protein RecR.